A 42-amino-acid chain; its full sequence is Iota-conotoxin-like R11.15 (42 aa).

Disulfide bonds link Cys-5–Cys-19, Cys-12–Cys-22, Cys-18–Cys-27, and Cys-21–Cys-36.

This sequence belongs to the conotoxin I1 superfamily. Expressed by the venom duct.

The protein resides in the secreted. In terms of biological role, iota-conotoxins bind to voltage-gated sodium channels (Nav) and act as agonists by shifting the voltage-dependence of activation to more hyperpolarized levels. Produces general excitatory symptoms. The protein is Iota-conotoxin-like R11.15 of Conus radiatus (Rayed cone).